Reading from the N-terminus, the 439-residue chain is Xaa-Pro dipeptidase (439 aa).

Residues D244, D255, H335, E380, and E419 each contribute to the Mn(2+) site.

It belongs to the peptidase M24B family. Bacterial-type prolidase subfamily. It depends on Mn(2+) as a cofactor.

The catalysed reaction is Xaa-L-Pro dipeptide + H2O = an L-alpha-amino acid + L-proline. Its function is as follows. Splits dipeptides with a prolyl residue in the C-terminal position. This is Xaa-Pro dipeptidase from Shewanella sp. (strain MR-4).